We begin with the raw amino-acid sequence, 267 residues long: Hydroxyethylthiazole kinase (267 aa).

Methionine 42 provides a ligand contact to substrate. Positions 118 and 164 each coordinate ATP. Position 191 (alanine 191) interacts with substrate.

Belongs to the Thz kinase family. Requires Mg(2+) as cofactor.

It catalyses the reaction 5-(2-hydroxyethyl)-4-methylthiazole + ATP = 4-methyl-5-(2-phosphooxyethyl)-thiazole + ADP + H(+). It participates in cofactor biosynthesis; thiamine diphosphate biosynthesis; 4-methyl-5-(2-phosphoethyl)-thiazole from 5-(2-hydroxyethyl)-4-methylthiazole: step 1/1. Functionally, catalyzes the phosphorylation of the hydroxyl group of 4-methyl-5-beta-hydroxyethylthiazole (THZ). This Pasteurella multocida (strain Pm70) protein is Hydroxyethylthiazole kinase.